The primary structure comprises 332 residues: Glycerol-3-phosphate dehydrogenase [NAD(P)+] (332 aa).

3 residues coordinate NADPH: W11, R30, and K108. K108, G137, and S139 together coordinate sn-glycerol 3-phosphate. A141 contributes to the NADPH binding site. Residues K192, D245, S255, R256, and N257 each contribute to the sn-glycerol 3-phosphate site. K192 functions as the Proton acceptor in the catalytic mechanism. NADPH is bound at residue R256. The NADPH site is built by V280 and E282.

Belongs to the NAD-dependent glycerol-3-phosphate dehydrogenase family.

Its subcellular location is the cytoplasm. The catalysed reaction is sn-glycerol 3-phosphate + NAD(+) = dihydroxyacetone phosphate + NADH + H(+). It catalyses the reaction sn-glycerol 3-phosphate + NADP(+) = dihydroxyacetone phosphate + NADPH + H(+). The protein operates within membrane lipid metabolism; glycerophospholipid metabolism. Catalyzes the reduction of the glycolytic intermediate dihydroxyacetone phosphate (DHAP) to sn-glycerol 3-phosphate (G3P), the key precursor for phospholipid synthesis. This Burkholderia lata (strain ATCC 17760 / DSM 23089 / LMG 22485 / NCIMB 9086 / R18194 / 383) protein is Glycerol-3-phosphate dehydrogenase [NAD(P)+].